The sequence spans 430 residues: Protein IQ-DOMAIN 3 (430 aa).

The segment at 1–36 is disordered; the sequence is MGKSWFSAVKKALSPEPKQKKEQKPHKSKKWFGKSK. The Nuclear localization signal 1 signature appears at 9–16; sequence VKKALSPE. A compositionally biased stretch (basic residues) spans 23–35; it reads QKPHKSKKWFGKS. The IQ domain occupies 107 to 135; that stretch reads EEIAAIKIQTAFRGYMARRALRALRGLVR. Positions 170–224 form a coiled coil; the sequence is RLRLSEDKQALTRQLQQKHNKDFDKTGENWNDSTLSREKVEANMLNKQVATMRRE. A calmodulin-binding region spans residues 213-231; sequence MLNKQVATMRREKALAYAF. Disordered stretches follow at residues 271 to 368 and 385 to 430; these read ENHS…SQSV and SNLS…TNLA. Over residues 286–295 the composition is skewed to low complexity; sequence ARSVASRAMS. Residues 326 to 340 show a composition bias toward polar residues; the sequence is SEDSNSIVSFQSEQP. Residues 396-403 carry the Nuclear localization signal 2 motif; that stretch reads AKKRLSFS.

Belongs to the IQD family. Binds to multiple calmodulin (CaM) in the presence of Ca(2+) and CaM-like proteins.

It is found in the nucleus. It localises to the nucleolus. The protein localises to the cytoplasm. The protein resides in the cytoskeleton. In terms of biological role, may be involved in cooperative interactions with calmodulins or calmodulin-like proteins. Recruits calmodulin proteins to microtubules, thus being a potential scaffold in cellular signaling and trafficking. May associate with nucleic acids and regulate gene expression at the transcriptional or post-transcriptional level. The protein is Protein IQ-DOMAIN 3 of Arabidopsis thaliana (Mouse-ear cress).